Here is a 362-residue protein sequence, read N- to C-terminus: Homoserine O-acetyltransferase FUB5 (362 aa).

The region spanning 12–335 is the AB hydrolase-1 domain; that stretch reads NVMIICHALS…VSDDGHDAFL (324 aa). Serine 110 functions as the Nucleophile in the catalytic mechanism. The interval 195-232 is disordered; sequence RFGRDTGNKKKTQQQDSKTIPNNGTPIHSQGGADETPV. The span at 208–222 shows a compositional bias: polar residues; sequence QQDSKTIPNNGTPIH. Residues aspartate 302 and histidine 331 contribute to the active site.

Belongs to the AB hydrolase superfamily. MetX family.

The enzyme catalyses L-homoserine + acetyl-CoA = O-acetyl-L-homoserine + CoA. The protein operates within mycotoxin biosynthesis. Homoserine O-acetyltransferase; part of the gene cluster that mediates the biosynthesis of fusaric acid, a mycotoxin with low to moderate toxicity to animals and humans, but with high phytotoxic properties. L-aspartate is suggested as fusaric acid amino acid precursor that is activated and further processed to O-acetyl-L-homoserine by cluster enzymes aspartate kinase FUB3 and homoserine O-acetyltransferase FUB5, as well as enzymes of the primary metabolism. The polyketide synthase (PKS) FUB1 generates the triketide trans-2-hexenal which is presumptively released by the hydrolase FUB4 and linked to the NRPS-bound amino acid precursor by NAD(P)-dependent dehydrogenase FUB6. FUB1, FUB4, and the non-canonical NRPS Fub8 may form an enzyme complex. Further processing of the NRPS-bound intermediate might be carried out by FUB6 and the O-acetylhomoserine FUB7, enabling a spontaneous electrocyclization to close the carbon backbone of fusaric acid. Dihydrofusaric acid is likely to be released via reduction by the thioester reductase (TR) domain of FUB8 whereupon the final oxidation to fusaric acid may (also) be performed by the FMN-dependent dehydrogenase FUB9. The polypeptide is Homoserine O-acetyltransferase FUB5 (Fusarium oxysporum f. sp. lycopersici (strain 4287 / CBS 123668 / FGSC 9935 / NRRL 34936) (Fusarium vascular wilt of tomato)).